A 240-amino-acid polypeptide reads, in one-letter code: MSGFIKSTLLGLGQDYLEDQYQEFAEQHFQPTRDPFYETNKDGKKHRRRLPYYCTKDESKAWKKVQNKAWLHDKSLCGCCCWTNTIGWAPLLALLPVIGPLLMYWVHDKLIELADDRYKLPAEIKVKMHGNIVIDLLISLVPILGSVFAWLHACSTRNAAIVYNFVGKRALERKQAELMHQKEENEKHSNANTAPPVVGGNKNVNGNRNNSKMYNRPPVTAPPAPAYTRSTNGRPQRGYR.

Residues 1 to 85 lie on the Cytoplasmic side of the membrane; it reads MSGFIKSTLL…LCGCCCWTNT (85 aa). Residues 86-106 traverse the membrane as a helical segment; it reads IGWAPLLALLPVIGPLLMYWV. The Extracellular segment spans residues 107 to 131; sequence HDKLIELADDRYKLPAEIKVKMHGN. A helical membrane pass occupies residues 132 to 152; sequence IVIDLLISLVPILGSVFAWLH. Over 153 to 240 the chain is Cytoplasmic; the sequence is ACSTRNAAIV…TNGRPQRGYR (88 aa). The disordered stretch occupies residues 181–240; that stretch reads QKEENEKHSNANTAPPVVGGNKNVNGNRNNSKMYNRPPVTAPPAPAYTRSTNGRPQRGYR. A compositionally biased stretch (low complexity) spans 197–210; that stretch reads VVGGNKNVNGNRNN.

Its subcellular location is the membrane. This is an uncharacterized protein from Saccharomyces cerevisiae (strain ATCC 204508 / S288c) (Baker's yeast).